We begin with the raw amino-acid sequence, 76 residues long: MNKALFLCLVVLCAAVVFAAEDLQKAKHVPFKRAAICFCPGKPDRGDLWIFRGTCPGGYGYTSNCYKWPNICCYPH.

The signal sequence occupies residues Met1–Ala19. A propeptide spanning residues Ala20–Phe31 is cleaved from the precursor. 3 disulfide bridges follow: Cys37–Cys72, Cys39–Cys65, and Cys55–Cys73.

Belongs to the sea anemone type 3 (BDS) potassium channel toxin family. As to expression, moderately expressed in the ectodermal tissue from the distal and proximal tentacles, body wall, and oral disk.

It localises to the secreted. Its subcellular location is the nematocyst. Blocks Kv3 voltage-gated potassium channels. Reduces blood pressure. The polypeptide is Kappa-actitoxin-Avd4d (Anemonia viridis (Snakelocks anemone)).